The primary structure comprises 393 residues: Cytochrome b (393 aa).

Transmembrane regions (helical) follow at residues 33–53 (FGSL…FLAM), 77–98 (WFLR…YLHM), 113–133 (WNIG…GYVL), and 178–198 (FFAI…LHLL). Histidine 83 and histidine 97 together coordinate heme b. The heme b site is built by histidine 182 and histidine 196. Residue histidine 201 coordinates a ubiquinone. The next 4 helical transmembrane spans lie at 226–246 (YKDV…ALFA), 288–308 (LGGV…PFIH), 320–340 (LSQL…WIGG), and 347–367 (FIII…ILMP).

The protein belongs to the cytochrome b family. As to quaternary structure, the cytochrome bc1 complex contains 3 respiratory subunits (MT-CYB, CYC1 and UQCRFS1), 2 core proteins (UQCRC1 and UQCRC2) and probably 6 low-molecular weight proteins. Heme b is required as a cofactor.

The protein localises to the mitochondrion inner membrane. Component of the ubiquinol-cytochrome c reductase complex (complex III or cytochrome b-c1 complex) that is part of the mitochondrial respiratory chain. The b-c1 complex mediates electron transfer from ubiquinol to cytochrome c. Contributes to the generation of a proton gradient across the mitochondrial membrane that is then used for ATP synthesis. This chain is Cytochrome b (mt-cyb), found in Synbranchus marmoratus (Marbled swamp eel).